A 309-amino-acid polypeptide reads, in one-letter code: 2-oxoacid:ferredoxin oxidoreductase 2, subunit beta (309 aa).

[4Fe-4S] cluster is bound by residues C17, C20, and C51. Residues 49–52 (IGCS) and H68 each bind thiamine diphosphate. Residue D93 participates in Mg(2+) binding. Thiamine diphosphate is bound at residue 94–95 (GD). The Mg(2+) site is built by N121 and V123. A thiamine diphosphate-binding site is contributed by 125–126 (GL). C200 contacts [4Fe-4S] cluster.

As to quaternary structure, heterodimer composed of an alpha and a beta subunit. [4Fe-4S] cluster serves as cofactor. It depends on thiamine diphosphate as a cofactor. Mg(2+) is required as a cofactor.

The enzyme catalyses a 2-oxocarboxylate + 2 oxidized [2Fe-2S]-[ferredoxin] + CoA = an acyl-CoA + 2 reduced [2Fe-2S]-[ferredoxin] + CO2 + H(+). Catalyzes the coenzyme A-dependent oxidative decarboxylation of different 2-oxoacids such as pyruvate, 2-oxobutyrate, glyoxylate and 2-oxoglutarate to form their CoA derivatives. The protein is 2-oxoacid:ferredoxin oxidoreductase 2, subunit beta of Aeropyrum pernix (strain ATCC 700893 / DSM 11879 / JCM 9820 / NBRC 100138 / K1).